We begin with the raw amino-acid sequence, 930 residues long: Beta-mannosidase A (930 aa).

The N-terminal stretch at 1–21 is a signal peptide; that stretch reads MHVKAETVLALLTPGLPSVVG. N-linked (GlcNAc...) asparagine glycosylation is found at asparagine 62, asparagine 246, asparagine 281, asparagine 315, and asparagine 346. Glutamate 478 acts as the Proton donor in catalysis. 11 N-linked (GlcNAc...) asparagine glycosylation sites follow: asparagine 536, asparagine 607, asparagine 630, asparagine 657, asparagine 737, asparagine 760, asparagine 782, asparagine 789, asparagine 797, asparagine 823, and asparagine 909.

Belongs to the glycosyl hydrolase 2 family. Beta-mannosidase A subfamily. As to quaternary structure, homodimer.

The protein localises to the secreted. The catalysed reaction is Hydrolysis of terminal, non-reducing beta-D-mannose residues in beta-D-mannosides.. The protein operates within glycan metabolism; N-glycan degradation. Exoglycosidase that cleaves the single beta-linked mannose residue from the non-reducing end of beta-mannosidic oligosaccharides of various complexity and length. Involved in the degradation of polymeric mannan and galactomannan. This chain is Beta-mannosidase A (mndA), found in Neosartorya fischeri (strain ATCC 1020 / DSM 3700 / CBS 544.65 / FGSC A1164 / JCM 1740 / NRRL 181 / WB 181) (Aspergillus fischerianus).